Here is a 603-residue protein sequence, read N- to C-terminus: Elongation factor 4 (603 aa).

One can recognise a tr-type G domain in the interval 7–189; that stretch reads SRIRNFSIIA…SIVQLVPPPQ (183 aa). GTP-binding positions include 19 to 24 and 136 to 139; these read DHGKST and NKID.

This sequence belongs to the TRAFAC class translation factor GTPase superfamily. Classic translation factor GTPase family. LepA subfamily.

The protein localises to the cell inner membrane. The catalysed reaction is GTP + H2O = GDP + phosphate + H(+). Required for accurate and efficient protein synthesis under certain stress conditions. May act as a fidelity factor of the translation reaction, by catalyzing a one-codon backward translocation of tRNAs on improperly translocated ribosomes. Back-translocation proceeds from a post-translocation (POST) complex to a pre-translocation (PRE) complex, thus giving elongation factor G a second chance to translocate the tRNAs correctly. Binds to ribosomes in a GTP-dependent manner. This Microcystis aeruginosa (strain NIES-843 / IAM M-2473) protein is Elongation factor 4.